The chain runs to 364 residues: Nucleoporin SEH1 (364 aa).

WD repeat units lie at residues 10–49 (DHKDLIHDVSYDFHGRRMATCSSDQSVKVWDKSDNGEWNC), 55–96 (THSG…SNDK), 111–152 (DSRT…NLSQ), 160–210 (SCKL…RKYA), 217–258 (TVTD…KESS), and 275–314 (GHNSQVWRVSWNITSTLLASSGDDGCVRLWKANYMDNWKC). A disordered region spans residues 326–364 (NGAAGQAGTPGAAGTPGGPASQNALQAVAGRKKAQLMPG). A compositionally biased stretch (low complexity) spans 327-338 (GAAGQAGTPGAA). Residues 355–364 (GRKKAQLMPG) are compositionally biased toward basic residues.

Belongs to the WD repeat SEC13 family. As to quaternary structure, component of the Nup107-160 subcomplex of the nuclear pore complex (NPC). The Nup107-160 subcomplex includes NUP160, NUP133, NUP107, NUP98, NUP85, NUP43, NUP37, SEH1 and SEC13. Component of the GATOR2 subcomplex, composed of MIOS, SEC13, SEH1L, WDR24 and WDR59. The GATOR2 complex interacts with CASTOR1 and CASTOR2; the interaction is negatively regulated by arginine. The GATOR2 complex interacts with SESN1, SESN2 and SESN3; the interaction is negatively regulated by amino acids.

It is found in the chromosome. It localises to the centromere. The protein localises to the kinetochore. The protein resides in the nucleus. Its subcellular location is the nuclear pore complex. It is found in the lysosome membrane. The GATOR2 complex is negatively regulated by the upstream amino acid sensors CASTOR1 and SESN2, which sequester the GATOR2 complex in absence of amino acids. In the presence of abundant amino acids, GATOR2 is released from CASTOR1 and SESN2 and activated. Its function is as follows. Component of the Nup107-160 subcomplex of the nuclear pore complex (NPC). The Nup107-160 subcomplex is required for the assembly of a functional NPC. The Nup107-160 subcomplex is also required for normal kinetochore microtubule attachment, mitotic progression and chromosome segregation. This subunit plays a role in recruitment of the Nup107-160 subcomplex to the kinetochore. In terms of biological role, as a component of the GATOR2 complex, functions as an activator of the amino acid-sensing branch of the mTORC1 signaling pathway. The GATOR2 complex indirectly activates mTORC1 through the inhibition of the GATOR1 subcomplex. GATOR2 probably acts as an E3 ubiquitin-protein ligase toward GATOR1. In the presence of abundant amino acids, the GATOR2 complex mediates ubiquitination of the NPRL2 core component of the GATOR1 complex, leading to GATOR1 inactivation. In the absence of amino acids, GATOR2 is inhibited, activating the GATOR1 complex. The protein is Nucleoporin SEH1 (seh1l) of Osmerus mordax (Rainbow smelt).